We begin with the raw amino-acid sequence, 230 residues long: RNA-binding protein 24 (230 aa).

Positions 11 to 88 constitute an RRM domain; that stretch reads TKIFVGGLPY…RKANVNLAYL (78 aa).

It localises to the nucleus. The protein localises to the cytoplasm. In terms of biological role, multifunctional RNA-binding protein involved in the regulation of pre-mRNA splicing, mRNA stability and mRNA translation important for cell fate decision and differentiation. Plays a major role in pre-mRNA alternative splicing regulation. Mediates preferentially muscle-specific exon inclusion in numerous mRNAs important for striated cardiac and skeletal muscle cell differentiation. Binds to intronic splicing enhancer (ISE) composed of stretches of GU-rich motifs localized in flanking intron of exon that will be included by alternative splicing. Involved in embryonic stem cell (ESC) transition to cardiac cell differentiation by promoting pre-mRNA alternative splicing events of several pluripotency and/or differentiation genes. Plays a role in the regulation of mRNA stability and mRNA translation to which it is bound. Involved in myogenic differentiation by regulating myog levels. Binds to a huge amount of mRNAs. Required for embryonic heart development, sarcomer and M-band formation in striated muscles. In Danio rerio (Zebrafish), this protein is RNA-binding protein 24 (rbm24).